Reading from the N-terminus, the 258-residue chain is Deoxyribose-phosphate aldolase (258 aa).

Asp102 acts as the Proton donor/acceptor in catalysis. Residue Lys165 is the Schiff-base intermediate with acetaldehyde of the active site. Catalysis depends on Lys199, which acts as the Proton donor/acceptor.

It belongs to the DeoC/FbaB aldolase family. DeoC type 2 subfamily.

It is found in the cytoplasm. It carries out the reaction 2-deoxy-D-ribose 5-phosphate = D-glyceraldehyde 3-phosphate + acetaldehyde. It functions in the pathway carbohydrate degradation; 2-deoxy-D-ribose 1-phosphate degradation; D-glyceraldehyde 3-phosphate and acetaldehyde from 2-deoxy-alpha-D-ribose 1-phosphate: step 2/2. Its function is as follows. Catalyzes a reversible aldol reaction between acetaldehyde and D-glyceraldehyde 3-phosphate to generate 2-deoxy-D-ribose 5-phosphate. The polypeptide is Deoxyribose-phosphate aldolase (Aliivibrio fischeri (strain MJ11) (Vibrio fischeri)).